Reading from the N-terminus, the 205-residue chain is 3-demethoxyubiquinol 3-hydroxylase (205 aa).

Fe cation contacts are provided by Glu54, Glu84, His87, Glu136, Glu168, and His171.

Belongs to the COQ7 family. The cofactor is Fe cation.

It is found in the cell membrane. It carries out the reaction a 5-methoxy-2-methyl-3-(all-trans-polyprenyl)benzene-1,4-diol + AH2 + O2 = a 3-demethylubiquinol + A + H2O. Its pathway is cofactor biosynthesis; ubiquinone biosynthesis. Functionally, catalyzes the hydroxylation of 2-nonaprenyl-3-methyl-6-methoxy-1,4-benzoquinol during ubiquinone biosynthesis. The polypeptide is 3-demethoxyubiquinol 3-hydroxylase (Delftia acidovorans (strain DSM 14801 / SPH-1)).